A 302-amino-acid chain; its full sequence is 4-diphosphocytidyl-2-C-methyl-D-erythritol kinase (302 aa).

Residue Lys-13 is part of the active site. 101–111 (PVASGIGGGSS) is a binding site for ATP. Asp-143 is a catalytic residue.

Belongs to the GHMP kinase family. IspE subfamily.

The catalysed reaction is 4-CDP-2-C-methyl-D-erythritol + ATP = 4-CDP-2-C-methyl-D-erythritol 2-phosphate + ADP + H(+). The protein operates within isoprenoid biosynthesis; isopentenyl diphosphate biosynthesis via DXP pathway; isopentenyl diphosphate from 1-deoxy-D-xylulose 5-phosphate: step 3/6. Its function is as follows. Catalyzes the phosphorylation of the position 2 hydroxy group of 4-diphosphocytidyl-2C-methyl-D-erythritol. The chain is 4-diphosphocytidyl-2-C-methyl-D-erythritol kinase from Granulibacter bethesdensis (strain ATCC BAA-1260 / CGDNIH1).